A 153-amino-acid chain; its full sequence is Insulin-like growth factor 1 (153 aa).

Positions 49-77 (GPETLCGAELVDALQFVCGDRGFYFNKPT) are b. Cystine bridges form between Cys54–Cys96, Cys66–Cys109, and Cys95–Cys100. Residues 78–89 (GYGSSSRRAPQT) are c. An a region spans residues 90–110 (GIVDECCFRSCDLRRLEMYCA). The d stretch occupies residues 111 to 118 (PLKPAKSA). Residues 119–153 (RSVRAQRHTDMPKAQKEVHLKNASRGSAGNKNYRM) constitute a propeptide, e peptide. The tract at residues 120-153 (SVRAQRHTDMPKAQKEVHLKNASRGSAGNKNYRM) is disordered. The span at 125-138 (RHTDMPKAQKEVHL) shows a compositional bias: basic and acidic residues. Over residues 142–153 (SRGSAGNKNYRM) the composition is skewed to polar residues.

The protein belongs to the insulin family. In terms of assembly, forms a ternary complex with IGFR1 and ITGAV:ITGB3. Forms a ternary complex with IGFR1 and ITGA6:ITGB4. Forms a ternary complex with IGFBP3 and ALS.

The protein resides in the secreted. The insulin-like growth factors, isolated from plasma, are structurally and functionally related to insulin but have a much higher growth-promoting activity. May be a physiological regulator of [1-14C]-2-deoxy-D-glucose (2DG) transport and glycogen synthesis in osteoblasts. Stimulates glucose transport in bone-derived osteoblastic (PyMS) cells and is effective at much lower concentrations than insulin, not only regarding glycogen and DNA synthesis but also with regard to enhancing glucose uptake. May play a role in synapse maturation. Ca(2+)-dependent exocytosis of IGF1 is required for sensory perception of smell in the olfactory bulb. Acts as a ligand for IGF1R. Binds to the alpha subunit of IGF1R, leading to the activation of the intrinsic tyrosine kinase activity which autophosphorylates tyrosine residues in the beta subunit thus initiating a cascade of down-stream signaling events leading to activation of the PI3K-AKT/PKB and the Ras-MAPK pathways. Binds to integrins ITGAV:ITGB3 and ITGA6:ITGB4. Its binding to integrins and subsequent ternary complex formation with integrins and IGFR1 are essential for IGF1 signaling. Induces the phosphorylation and activation of IGFR1, MAPK3/ERK1, MAPK1/ERK2 and AKT1. As part of the MAPK/ERK signaling pathway, acts as a negative regulator of apoptosis in cardiomyocytes via promotion of STUB1/CHIP-mediated ubiquitination and degradation of ICER-type isoforms of CREM. The protein is Insulin-like growth factor 1 of Panthera tigris altaica (Siberian tiger).